The following is a 477-amino-acid chain: ACT domain-containing protein ACR1 (477 aa).

ACT domains lie at 38 to 124 (LIKV…REVQ), 134 to 214 (AFEI…GDVS), 283 to 358 (MVNV…RASQ), and 361 to 441 (KLEI…MMPR). Residues 329 to 345 (KKNGGTLETEGQRERLR) carry the Bipartite nuclear localization signal motif.

As to expression, expressed in flowers and siliques.

Its subcellular location is the nucleus. Its function is as follows. May bind amino acids. The sequence is that of ACT domain-containing protein ACR1 from Arabidopsis thaliana (Mouse-ear cress).